Consider the following 79-residue polypeptide: UPF0154 protein SUB0399 (79 aa).

The chain crosses the membrane as a helical span at residues 4 to 24; sequence AIWILLIVLALIGGLFGGVFI.

This sequence belongs to the UPF0154 family.

The protein resides in the cell membrane. The polypeptide is UPF0154 protein SUB0399 (Streptococcus uberis (strain ATCC BAA-854 / 0140J)).